A 229-amino-acid chain; its full sequence is MWLAVNIGNSRQHWGWFTGTKLVRTLDFPLTHWDAQAPDAAEQIVVASVTTTHLERWRTLPHARILNLADVPLSGTYPTLGIDRALNLIAAADAYGCPALVTDFGTAITLSAVDEFGRFCGGAILPGLGTQLRALEHFTAALPAVDLPEPWPPLLARTTQAAIQSGVVRVTLAGLAQFLESWKRQYPGGISVATGGDSERVHRWLPDLFDVQDTHLTLWGICVAARGAD.

6 to 13 lines the ATP pocket; that stretch reads NIGNSRQH. Substrate contacts are provided by residues Y77 and 81-84; that span reads GIDR. D83 (proton acceptor) is an active-site residue. D103 is a K(+) binding site. T106 contacts ATP. T159 contributes to the substrate binding site.

The protein belongs to the type III pantothenate kinase family. Homodimer. Requires NH4(+) as cofactor. K(+) serves as cofactor.

It is found in the cytoplasm. It catalyses the reaction (R)-pantothenate + ATP = (R)-4'-phosphopantothenate + ADP + H(+). It functions in the pathway cofactor biosynthesis; coenzyme A biosynthesis; CoA from (R)-pantothenate: step 1/5. Functionally, catalyzes the phosphorylation of pantothenate (Pan), the first step in CoA biosynthesis. The polypeptide is Type III pantothenate kinase (Gloeobacter violaceus (strain ATCC 29082 / PCC 7421)).